The sequence spans 475 residues: Ribulose bisphosphate carboxylase large chain (475 aa).

A propeptide spanning residues 1–2 is cleaved from the precursor; it reads MS. Position 3 is an N-acetylproline (P3). Position 14 is an N6,N6,N6-trimethyllysine (K14). N123 and T173 together coordinate substrate. K175 (proton acceptor) is an active-site residue. Residue K177 participates in substrate binding. Residues K201, D203, and E204 each contribute to the Mg(2+) site. The residue at position 201 (K201) is an N6-carboxylysine. H294 serves as the catalytic Proton acceptor. The substrate site is built by R295, H327, and S379.

Belongs to the RuBisCO large chain family. Type I subfamily. Heterohexadecamer of 8 large chains and 8 small chains; disulfide-linked. The disulfide link is formed within the large subunit homodimers. The cofactor is Mg(2+). In terms of processing, the disulfide bond which can form in the large chain dimeric partners within the hexadecamer appears to be associated with oxidative stress and protein turnover.

The protein resides in the plastid. It localises to the chloroplast. It catalyses the reaction 2 (2R)-3-phosphoglycerate + 2 H(+) = D-ribulose 1,5-bisphosphate + CO2 + H2O. The enzyme catalyses D-ribulose 1,5-bisphosphate + O2 = 2-phosphoglycolate + (2R)-3-phosphoglycerate + 2 H(+). RuBisCO catalyzes two reactions: the carboxylation of D-ribulose 1,5-bisphosphate, the primary event in carbon dioxide fixation, as well as the oxidative fragmentation of the pentose substrate in the photorespiration process. Both reactions occur simultaneously and in competition at the same active site. This is Ribulose bisphosphate carboxylase large chain from Calycanthus floridus var. glaucus (Eastern sweetshrub).